Here is a 235-residue protein sequence, read N- to C-terminus: Small ribosomal subunit protein uS2 (235 aa).

Belongs to the universal ribosomal protein uS2 family.

The chain is Small ribosomal subunit protein uS2 from Geobacillus thermodenitrificans (strain NG80-2).